Reading from the N-terminus, the 824-residue chain is Frameshifted structural polyprotein (824 aa).

Positions 1 to 10 are enriched in polar residues; the sequence is MEFIPTQTFY. Residues 1-104 are disordered; sequence MEFIPTQTFY…KKKKPGRRER (104 aa). Positions 22–44 are enriched in low complexity; that stretch reads RPTIQVIRPRPRPQRQAGQLAQL. Positions 36-68 are host transcription inhibition; it reads RQAGQLAQLISAVNKLTMRAVPQQKPRKNRKNK. A compositionally biased stretch (basic residues) spans 60–72; it reads KPRKNRKNKKQKQ. Positions 61–99 match the Nuclear localization signal motif; it reads PRKNRKNKKQKQKQQAPQNNTNQKKQPPKKKPAQKKKKP. Residues 73 to 85 show a composition bias toward low complexity; the sequence is KQQAPQNNTNQKK. The segment at 84–114 is binding to the viral RNA; the sequence is KKQPPKKKPAQKKKKPGRRERMCMKIENDCI. Basic residues predominate over residues 86 to 101; it reads QPPKKKPAQKKKKPGR. Ribosome-binding regions lie at residues 91–100 and 99–113; these read KPAQKKKKPG and PGRRERMCMKIENDC. A disulfide bond links C113 and C128. A Peptidase S3 domain is found at 113 to 261; it reads CIFEVKHEGK…KITPEGAEEW (149 aa). H139 serves as the catalytic Charge relay system. Residues 144 to 154 carry the Nuclear export signal motif; it reads IDNADLAKLAF. The Charge relay system role is filled by D161. Residues 183–193 are dimerization of the capsid protein; sequence PEGYYNWHHGA. The Charge relay system role is filled by S213. Residues 219-223 are dimerization of the capsid protein; it reads DNKGR. The tract at residues 262–274 is functions as an uncleaved signal peptide for the precursor of protein E3/E2; sequence SLAIPVMCLLANT. Residues 262 to 692 lie on the Extracellular side of the membrane; that stretch reads SLAIPVMCLL…YYYELYPTMT (431 aa). N273, N588, and N670 each carry an N-linked (GlcNAc...) asparagine; by host glycan. The helical transmembrane segment at 693 to 713 threads the bilayer; that stretch reads VVVVSVASFILLSMVGMAVGM. Over 714–748 the chain is Cytoplasmic; the sequence is CMCARRRCITPYELTPGATVPFLLSLICCIRTAKA. 3 S-palmitoyl cysteine; by host lipidation sites follow: C721, C741, and C742. Positions 721-741 are transient transmembrane before p62-6K protein processing; the sequence is CITPYELTPGATVPFLLSLIC. Over 749–763 the chain is Extracellular; that stretch reads ATYQEAAVYLWNEQQ. The chain crosses the membrane as a helical span at residues 764–784; the sequence is PLFWLQALIPLAALIVLCNCL. The Cytoplasmic segment spans residues 785 to 795; that stretch reads RLLPCCCKTLA.

The protein belongs to the alphavirus frameshifted structural polyprotein family. Homodimer. Homomultimer. Interacts with host karyopherin KPNA4; this interaction allows the nuclear import of the viral capsid protein. Interacts with spike glycoprotein E2. Interacts with host IRAK1; the interaction leads to inhibition of IRAK1-dependent signaling. As to quaternary structure, the precursor of protein E3/E2 and E1 form a heterodimer shortly after synthesis. In terms of assembly, processing of the precursor of protein E3/E2 into E2 and E3 results in a heterodimer of the spike glycoproteins E2 and E1. Spike at virion surface are constituted of three E2-E1 heterodimers. Interacts with 6K protein. Interacts with host MXRA8; this interaction mediates virus entry. In terms of processing, specific enzymatic cleavages in vivo yield mature proteins. Capsid protein is auto-cleaved during polyprotein translation, unmasking a signal peptide at the N-terminus of the precursor of E3/E2. The remaining polyprotein is then targeted to the host endoplasmic reticulum, where host signal peptidase cleaves it into pE2 and TF. pE2 is further processed to mature E3 and E2 by host furin in trans-Golgi vesicle. Post-translationally, palmitoylated via thioester bonds. These palmitoylations may induce disruption of the C-terminus transmembrane. This would result in the reorientation of E2 C-terminus from lumenal to cytoplasmic side. Palmitoylated via thioester bonds.

It localises to the virion. Its subcellular location is the host cytoplasm. The protein resides in the host cell membrane. It is found in the host nucleus. The protein localises to the virion membrane. It catalyses the reaction Autocatalytic release of the core protein from the N-terminus of the togavirus structural polyprotein by hydrolysis of a -Trp-|-Ser- bond.. In terms of biological role, forms an icosahedral capsid with a T=4 symmetry composed of 240 copies of the capsid protein surrounded by a lipid membrane through which penetrate 80 spikes composed of trimers of E1-E2 heterodimers. The capsid protein binds to the viral RNA genome at a site adjacent to a ribosome binding site for viral genome translation following genome release. Possesses a protease activity that results in its autocatalytic cleavage from the nascent structural protein. Following its self-cleavage, the capsid protein transiently associates with ribosomes, and within several minutes the protein binds to viral RNA and rapidly assembles into icosahedric core particles. The resulting nucleocapsid eventually associates with the cytoplasmic domain of the spike glycoprotein E2 at the cell membrane, leading to budding and formation of mature virions. In case of infection, new virions attach to target cells and after clathrin-mediated endocytosis their membrane fuses with the host endosomal membrane. This leads to the release of the nucleocapsid into the cytoplasm, followed by an uncoating event necessary for the genomic RNA to become accessible. The uncoating might be triggered by the interaction of capsid proteins with ribosomes. Binding of ribosomes would release the genomic RNA since the same region is genomic RNA-binding and ribosome-binding. Specifically inhibits interleukin-1 receptor-associated kinase 1/IRAK1-dependent signaling during viral entry, representing a means by which the alphaviruses may evade innate immune detection and activation prior to viral gene expression. Functionally, provides the signal sequence for the translocation of the precursor of protein E3/E2 to the host endoplasmic reticulum. Furin-cleaved E3 remains associated with spike glycoprotein E1 and mediates pH protection of the latter during the transport via the secretory pathway. After virion release from the host cell, the assembly protein E3 is gradually released in the extracellular space. Plays a role in viral attachment to target host cell, by binding to the cell receptor. Synthesized as a p62 precursor which is processed by furin at the cell membrane just before virion budding, giving rise to E2-E1 heterodimer. The p62-E1 heterodimer is stable, whereas E2-E1 is unstable and dissociate at low pH. p62 is processed at the last step, presumably to avoid E1 fusion activation before its final export to cell surface. E2 C-terminus contains a transitory transmembrane that would be disrupted by palmitoylation, resulting in reorientation of the C-terminal tail from lumenal to cytoplasmic side. This step is critical since E2 C-terminus is involved in budding by interacting with capsid proteins. This release of E2 C-terminus in cytoplasm occurs lately in protein export, and precludes premature assembly of particles at the endoplasmic reticulum membrane. Its function is as follows. Plays a role in viral assembly and release. The sequence is that of Frameshifted structural polyprotein from Aedes aegypti (Yellowfever mosquito).